The sequence spans 1196 residues: Cingulin (1196 aa).

A head region spans residues 7 to 354; sequence MAEPRGPVDH…LVMTSGSAKG (348 aa). The short motif at 48–62 is the ZIM element; that stretch reads ANTYGVAVRVQGIAG. Positions 54–67 are interaction with TJP1/ZO1; the sequence is AVRVQGIAGQPFVV. Positions 82-105 are disordered; that stretch reads IKGTNNRGPPGALSSDSELPESTY. Residues serine 95, serine 96, serine 98, serine 135, serine 137, serine 140, serine 155, serine 165, and serine 214 each carry the phosphoserine modification. Positions 95-105 are enriched in polar residues; the sequence is SSDSELPESTY. Residues 183–263 are disordered; that stretch reads NKFDSRQGGQ…NQGPLGGFSC (81 aa). A compositionally biased stretch (basic and acidic residues) spans 218–231; that stretch reads RLPRDTLDEREHQF. A compositionally biased stretch (polar residues) spans 245–256; sequence MGNSKQSSQNQG. Phosphoserine is present on serine 274. A coiled-coil region spans residues 355–1150; that stretch reads LTGQSELSQK…ARIKTLEKDS (796 aa). An N6-acetyllysine modification is found at lysine 576. The segment covering 884–897 has biased composition (basic and acidic residues); sequence AQRQAKEWATEAEK. Disordered regions lie at residues 884-906, 1023-1061, and 1149-1174; these read AQRQ…SRLQ, DLKS…EERE, and DSWR…EEFD. Residues 1038–1050 show a composition bias toward low complexity; sequence SASLSQLESQNQE. Over residues 1051 to 1061 the composition is skewed to basic and acidic residues; the sequence is LQERLQAEERE. A tail region spans residues 1155-1196; it reads SRSAAESAQREGLSSDEEFDSVYDPSSIASLLTESNLQTSSC. Phosphoserine occurs at positions 1168, 1169, and 1175.

It belongs to the cingulin family. As to quaternary structure, homodimer. Interacts with TJP1/ZO1 and SPEF1.

It localises to the cell junction. It is found in the tight junction. Its function is as follows. Probably plays a role in the formation and regulation of the tight junction (TJ) paracellular permeability barrier. This chain is Cingulin, found in Canis lupus familiaris (Dog).